Here is a 615-residue protein sequence, read N- to C-terminus: NEDD8 ultimate buster 1 (615 aa).

Coiled coils occupy residues 36–70 (LALKDLAKQYSDRLECCENEVEKVIEEIRCKAIER) and 152–203 (KAMV…AAET). 3 UBA domains span residues 374–413 (YIDPSKVDNLLQLGFTAQEARLGLRACDGNVDHAATHITN), 424–470 (EEKE…LLSN), and 489–529 (SPSQ…LAHN). Residues 414–431 (RREELAQIRKEEKEKKRR) carry the Nuclear localization signal motif. The NEDD8-binding 1 stretch occupies residues 427 to 474 (EKKRRRLENIRFLKGMGYSTHAAQQVLHAASGNLDEALKILLSNPQMW). A disordered region spans residues 532-586 (SLPPELPLSPEDSLSPPATSPSDSAGTSSASTDEDMETEAVNEILEDIPEHEEDY). A compositionally biased stretch (low complexity) spans 539–562 (LSPEDSLSPPATSPSDSAGTSSAS). The segment at 550-598 (TSPSDSAGTSSASTDEDMETEAVNEILEDIPEHEEDYLDSTLEDEEIII) is NEDD8-binding 2. Over residues 563-586 (TDEDMETEAVNEILEDIPEHEEDY) the composition is skewed to acidic residues.

As to quaternary structure, directly interacts with NEDD8 and PSMD4/S5a, a member of the regulatory subunit of the 26S proteasome. Isoform 1 binds to NEDD8 more efficiently than isoform 2. Interacts with AIPL1. The interaction with UBD via UBA domains facilitates the linking of UBD-conjugated target protein to the proteasome complex and accelerates UBD degradation and that of its conjugates. Widely expressed with lowest expression in the pancreas for isoform 1 and in leukocytes, liver, prostate and skeletal muscle for isoform 2.

The protein localises to the nucleus. Functionally, specific down-regulator of the NEDD8 conjugation system. Recruits NEDD8, UBD, and their conjugates to the proteasome for degradation. Isoform 1 promotes the degradation of NEDD8 more efficiently than isoform 2. The sequence is that of NEDD8 ultimate buster 1 (NUB1) from Homo sapiens (Human).